A 561-amino-acid polypeptide reads, in one-letter code: Potassium-transporting ATPase potassium-binding subunit (561 aa).

A run of 12 helical transmembrane segments spans residues Leu-5–Val-25, Tyr-60–Leu-80, Val-86–Val-106, Gly-131–Ile-151, Ile-177–Ser-197, Pro-247–Thr-267, Leu-281–Ala-301, Phe-324–Val-344, Gly-376–Gly-396, Ala-415–Leu-435, Ala-488–Ala-508, and Gly-537–Ala-557.

This sequence belongs to the KdpA family. As to quaternary structure, the system is composed of three essential subunits: KdpA, KdpB and KdpC.

The protein resides in the cell membrane. Part of the high-affinity ATP-driven potassium transport (or Kdp) system, which catalyzes the hydrolysis of ATP coupled with the electrogenic transport of potassium into the cytoplasm. This subunit binds the extracellular potassium ions and delivers the ions to the membrane domain of KdpB through an intramembrane tunnel. In Rhodococcus opacus (strain B4), this protein is Potassium-transporting ATPase potassium-binding subunit.